A 220-amino-acid chain; its full sequence is Thiopurine S-methyltransferase (220 aa).

Residues Trp10, Leu45, Glu66, and Arg123 each contribute to the S-adenosyl-L-methionine site.

Belongs to the class I-like SAM-binding methyltransferase superfamily. TPMT family.

The protein localises to the cytoplasm. It carries out the reaction S-adenosyl-L-methionine + a thiopurine = S-adenosyl-L-homocysteine + a thiopurine S-methylether.. The chain is Thiopurine S-methyltransferase from Pseudomonas syringae pv. syringae (strain B728a).